The sequence spans 1030 residues: MRSEALLLYFTLLHFAGAGFPEDSEPISISHGNYTKQYPVFVGHKPGRNTTQRHRLDIQMIMIMNGTLYIAARDHIYTVDIDTSHTEEIYCSKKLTWKSRQADVDTCRMKGKHKDECHNFIKVLLKKNDDALFVCGTNAFNPSCRNYKMDTLEPFGDEFSGMARCPYDAKHANVALFADGKLYSATVTDFLAIDAVIYRSLGESPTLRTVKHDSKWLKEPYFVQAVDYGDYIYFFFREIAVEYNTMGKVVFPRVAQVCKNDMGGSQRVLEKQWTSFLKARLNCSVPGDSHFYFNILQAVTDVIRINGRDVVLATFSTPYNSIPGSAVCAYDMLDIASVFTGRFKEQKSPDSTWTPVPDERVPKPRPGCCAGSSSLERYATSNEFPDDTLNFIKTHPLMDEAVPSIFNRPWFLRTMVRYRLTKIAVDTAAGPYQNHTVVFLGSEKGIILKFLARIGNSGFLNDSLFLEEMSVYNSEKCSYDGVEDKRIMGMQLDRASSSLYVAFSTCVIKVPLGRCERHGKCKKTCIASRDPYCGWIKEGGACSHLSPNSRLTFEQDIERGNTDGLGDCHNSFVALNGHSSSLLPSTTTSDSTAQEGYESRGGMLDWKHLLDSPDSTDPLGAVSSHNHQDKKGVIRESYLKGHDQLVPVTLLAIAVILAFVMGAVFSGITVYCVCDHRRKDVAVVQRKEKELTHSRRGSMSSVTKLSGLFGDTQSKDPKPEAILTPLMHNGKLATPGNTAKMLIKADQHHLDLTALPTPESTPTLQQKRKPSRGSREWERNQNLINACTKDMPPMGSPVIPTDLPLRASPSHIPSVVVLPITQQGYQHEYVDQPKMSEVAQMALEDQAATLEYKTIKEHLSSKSPNHGVNLVENLDSLPPKVPQREASLGPPGASLSQTGLSKRLEMHHSSSYGVDYKRSYPTNSLTRSHQATTLKRNNTNSSNSSHLSRNQSFGRGDNPPPAPQRVDSIQVHSSQPSGQAVTVSRQPSLNAYNSLTRSGLKRTPSLKPDVPPKPSFAPLSTSMKPNDACT.

Positions 1–18 are cleaved as a signal peptide; sequence MRSEALLLYFTLLHFAGA. Topologically, residues 19–649 are extracellular; that stretch reads GFPEDSEPIS…KGHDQLVPVT (631 aa). One can recognise a Sema domain in the interval 24–512; the sequence is SEPISISHGN…FSTCVIKVPL (489 aa). Residues Asn-33, Asn-49, and Asn-65 are each glycosylated (N-linked (GlcNAc...) asparagine). 4 cysteine pairs are disulfide-bonded: Cys-107/Cys-117, Cys-135/Cys-144, Cys-258/Cys-369, and Cys-283/Cys-328. Asn-282 carries an N-linked (GlcNAc...) asparagine glycan. N-linked (GlcNAc...) asparagine glycans are attached at residues Asn-434 and Asn-461. 4 cysteine pairs are disulfide-bonded: Cys-477–Cys-506, Cys-515–Cys-533, Cys-521–Cys-568, and Cys-525–Cys-542. Residues 650-670 form a helical membrane-spanning segment; the sequence is LLAIAVILAFVMGAVFSGITV. The Cytoplasmic segment spans residues 671 to 1030; the sequence is YCVCDHRRKD…TSMKPNDACT (360 aa). Position 698 is a phosphoserine (Ser-698). Disordered regions lie at residues 754 to 778, 860 to 897, and 912 to 1030; these read ALPT…REWE, SSKS…SLSQ, and YGVD…DACT. Residues 920 to 936 are compositionally biased toward polar residues; that stretch reads YPTNSLTRSHQATTLKR. Positions 937–952 are enriched in low complexity; that stretch reads NNTNSSNSSHLSRNQS. Ser-952 carries the post-translational modification Phosphoserine. Polar residues-rich tracts occupy residues 970 to 997 and 1018 to 1030; these read QVHS…SLTR and PLST…DACT.

It belongs to the semaphorin family. In terms of assembly, active as a homodimer or oligomer. The SEMA6A homodimer interacts with a PLXNA2 homodimer, giving rise to a heterotetramer. Interacts with EVL. As to quaternary structure, (Microbial infection) Interacts with P.sordellii toxin TcsL; semaphorins SEMA6A and SEMA6B constitute the major host receptors for TcsL in the vascular endothelium.

Its subcellular location is the cell membrane. Its function is as follows. Cell surface receptor for PLXNA2 that plays an important role in cell-cell signaling. Required for normal granule cell migration in the developing cerebellum. Promotes reorganization of the actin cytoskeleton and plays an important role in axon guidance in the developing central nervous system. Can act as repulsive axon guidance cue. Has repulsive action towards migrating granular neurons. May play a role in channeling sympathetic axons into the sympathetic chains and controlling the temporal sequence of sympathetic target innervation. (Microbial infection) Acts as a receptor for P.sordellii toxin TcsL in the in the vascular endothelium. In Homo sapiens (Human), this protein is Semaphorin-6A (SEMA6A).